The following is a 156-amino-acid chain: Small ribosomal subunit protein uS7 (156 aa).

It belongs to the universal ribosomal protein uS7 family. Part of the 30S ribosomal subunit. Contacts proteins S9 and S11.

Functionally, one of the primary rRNA binding proteins, it binds directly to 16S rRNA where it nucleates assembly of the head domain of the 30S subunit. Is located at the subunit interface close to the decoding center, probably blocks exit of the E-site tRNA. The sequence is that of Small ribosomal subunit protein uS7 from Desulfitobacterium hafniense (strain Y51).